The primary structure comprises 435 residues: NADH-quinone oxidoreductase subunit D (435 aa).

Belongs to the complex I 49 kDa subunit family. As to quaternary structure, NDH-1 is composed of 14 different subunits. Subunits NuoB, C, D, E, F, and G constitute the peripheral sector of the complex.

The protein localises to the cell inner membrane. It catalyses the reaction a quinone + NADH + 5 H(+)(in) = a quinol + NAD(+) + 4 H(+)(out). Its function is as follows. NDH-1 shuttles electrons from NADH, via FMN and iron-sulfur (Fe-S) centers, to quinones in the respiratory chain. The immediate electron acceptor for the enzyme in this species is believed to be ubiquinone. Couples the redox reaction to proton translocation (for every two electrons transferred, four hydrogen ions are translocated across the cytoplasmic membrane), and thus conserves the redox energy in a proton gradient. This Xanthomonas campestris pv. campestris (strain 8004) protein is NADH-quinone oxidoreductase subunit D.